A 1274-amino-acid polypeptide reads, in one-letter code: VWFA and cache domain-containing protein 1 (1274 aa).

The signal sequence occupies residues 1-35 (MARQPEEEETAVARARRPPLWLLCLVACWLLGAGA). Residues 36-1095 (EADFSILDEA…ITLNMIKSAP (1060 aa)) are Extracellular-facing. Asn145 carries an N-linked (GlcNAc...) asparagine glycan. Residues 228–443 (HIVVILDHGA…TTVGRFYTNL (216 aa)) form the VWFA domain. Cache domains follow at residues 453-532 (FSLP…SEPP) and 772-853 (LTGP…HPTL). A helical membrane pass occupies residues 1096 to 1116 (VGPVAGGIMGCIMVLVLAVYA). At 1117-1274 (YRHQIHRRSH…VTVHTVDAEC (158 aa)) the chain is on the cytoplasmic side. Positions 1179 to 1227 (PERRRRYWGRSGTESDHGYSTMSPQEDSENPPCNNDPLSAGVDVGNHDE) are disordered. Residues 1196–1215 (GYSTMSPQEDSENPPCNNDP) are compositionally biased toward polar residues.

It belongs to the calcium channel subunit alpha-2/delta family.

It localises to the membrane. In terms of biological role, may regulate voltage-dependent calcium channels. This Homo sapiens (Human) protein is VWFA and cache domain-containing protein 1 (CACHD1).